The primary structure comprises 342 residues: UDP-xylose transporter 1 (342 aa).

10 helical membrane-spanning segments follow: residues 7-27, 36-56, 75-95, 100-120, 132-152, 154-174, 184-204, 221-241, 250-270, and 280-300; these read MQMG…SIVI, LGFP…YCTL, VVLF…SLGF, FYQM…TLFL, LFLL…LNFV, SVLS…TNTI, QLLY…GPFV, IVVG…FSTF, VTYQ…GYTL, and IAGI…CSVA. The segment at 305 to 342 is disordered; sequence QASSDSTFLGKDRDTTPLLGQENENHHEAKKLDKHSPV. The segment covering 327 to 342 has biased composition (basic and acidic residues); that stretch reads NENHHEAKKLDKHSPV.

The protein belongs to the TPT transporter family. TPT (TC 2.A.7.9) subfamily. As to expression, ubiquitous.

The protein localises to the golgi apparatus membrane. The protein resides in the endoplasmic reticulum membrane. Functionally, nucleotide-sugar transporter that transports UDP-xylose and UMP in a strict counter-exchange mode. The polypeptide is UDP-xylose transporter 1 (Arabidopsis thaliana (Mouse-ear cress)).